Here is a 232-residue protein sequence, read N- to C-terminus: Cytidylate kinase (232 aa).

Residue 11-19 coordinates ATP; it reads GPAGAGKST.

This sequence belongs to the cytidylate kinase family. Type 1 subfamily.

It localises to the cytoplasm. The enzyme catalyses CMP + ATP = CDP + ADP. The catalysed reaction is dCMP + ATP = dCDP + ADP. In Roseiflexus castenholzii (strain DSM 13941 / HLO8), this protein is Cytidylate kinase.